A 462-amino-acid chain; its full sequence is GTPase Der (462 aa).

EngA-type G domains follow at residues 9–171 (KTIA…GLTK) and 201–372 (IQVG…ECFS). Residues 15 to 22 (GQPNVGKS), 62 to 66 (DTGGM), 123 to 126 (NKID), 207 to 214 (GRVNVGKS), 254 to 258 (DTAGI), and 318 to 321 (NKWD) each bind GTP. Residues 373-457 (KRIPTSLLNS…PLIINAKDKK (85 aa)) form the KH-like domain.

Belongs to the TRAFAC class TrmE-Era-EngA-EngB-Septin-like GTPase superfamily. EngA (Der) GTPase family. As to quaternary structure, associates with the 50S ribosomal subunit.

Its function is as follows. GTPase that plays an essential role in the late steps of ribosome biogenesis. This Helicobacter acinonychis (strain Sheeba) protein is GTPase Der.